A 380-amino-acid polypeptide reads, in one-letter code: Flap endonuclease 1 (380 aa).

Residues 1 to 104 (MGIQGLAKLI…GELAKRSERR (104 aa)) are N-domain. A Symmetric dimethylarginine; by PRMT5 modification is found at arginine 19. Position 34 (aspartate 34) interacts with Mg(2+). Residues arginine 47 and arginine 70 each coordinate DNA. N6-acetyllysine is present on lysine 80. Aspartate 86 serves as a coordination point for Mg(2+). A symmetric dimethylarginine; by PRMT5 mark is found at arginine 100 and arginine 104. Residues 122 to 253 (EVEKFTKRLV…KRAVDLIQKH (132 aa)) form an I-domain region. Mg(2+)-binding residues include glutamate 158, glutamate 160, aspartate 179, and aspartate 181. Residue glutamate 158 coordinates DNA. The residue at position 187 (serine 187) is a Phosphoserine; by CDK2. Arginine 192 is subject to Symmetric dimethylarginine; by PRMT5. Serine 197 is modified (phosphoserine). Residues glycine 231 and aspartate 233 each contribute to the DNA site. A Mg(2+)-binding site is contributed by aspartate 233. Serine 255, serine 293, and serine 335 each carry phosphoserine. The tract at residues 327–380 (RLSKSRQGSTQGRLDDFFKVTGSLSSAKRKEPEPKGAAKKKAKTGAAGKFKRGK) is disordered. Threonine 336 is subject to Phosphothreonine. An interaction with PCNA region spans residues 336–344 (TQGRLDDFF). 4 positions are modified to N6-acetyllysine: lysine 354, lysine 375, lysine 377, and lysine 380. Residues 363–380 (AAKKKAKTGAAGKFKRGK) are compositionally biased toward basic residues.

Belongs to the XPG/RAD2 endonuclease family. FEN1 subfamily. Interacts with PCNA. Three molecules of FEN1 bind to one PCNA trimer with each molecule binding to one PCNA monomer. PCNA stimulates the nuclease activity without altering cleavage specificity. The C-terminal domain binds EP300; can bind simultaneously to both PCNA and EP300. Interacts with DDX11; this interaction is direct and increases flap endonuclease activity of FEN1. Interacts with WDR4; regulating its endonuclease activity. Interacts with POLB. Mg(2+) serves as cofactor. In terms of processing, acetylated by EP300. Acetylation inhibits both endonuclease and exonuclease activity. Acetylation also reduces DNA-binding activity but does not affect interaction with PCNA or EP300. Phosphorylation upon DNA damage induces relocalization to the nuclear plasma. Phosphorylation at Ser-187 by CDK2 occurs during late S-phase and results in dissociation from PCNA. Post-translationally, methylation at Arg-192 by PRMT5 impedes Ser-187 phosphorylation and increases interaction with PCNA.

It is found in the nucleus. Its subcellular location is the nucleolus. It localises to the nucleoplasm. The protein localises to the mitochondrion. In terms of biological role, structure-specific nuclease with 5'-flap endonuclease and 5'-3' exonuclease activities involved in DNA replication and repair. During DNA replication, cleaves the 5'-overhanging flap structure that is generated by displacement synthesis when DNA polymerase encounters the 5'-end of a downstream Okazaki fragment. It enters the flap from the 5'-end and then tracks to cleave the flap base, leaving a nick for ligation. Also involved in the long patch base excision repair (LP-BER) pathway, by cleaving within the apurinic/apyrimidinic (AP) site-terminated flap. Acts as a genome stabilization factor that prevents flaps from equilibrating into structures that lead to duplications and deletions. Also possesses 5'-3' exonuclease activity on nicked or gapped double-stranded DNA, and exhibits RNase H activity. Also involved in replication and repair of rDNA and in repairing mitochondrial DNA. The protein is Flap endonuclease 1 of Bos taurus (Bovine).